Reading from the N-terminus, the 252-residue chain is Triosephosphate isomerase (252 aa).

Substrate is bound at residue 9–11 (NWK). His96 serves as the catalytic Electrophile. Glu168 (proton acceptor) is an active-site residue. Substrate is bound by residues Gly174, Ser214, and 235–236 (GG).

This sequence belongs to the triosephosphate isomerase family. In terms of assembly, homodimer.

It is found in the cytoplasm. It carries out the reaction D-glyceraldehyde 3-phosphate = dihydroxyacetone phosphate. It participates in carbohydrate biosynthesis; gluconeogenesis. The protein operates within carbohydrate degradation; glycolysis; D-glyceraldehyde 3-phosphate from glycerone phosphate: step 1/1. Involved in the gluconeogenesis. Catalyzes stereospecifically the conversion of dihydroxyacetone phosphate (DHAP) to D-glyceraldehyde-3-phosphate (G3P). This Chloroherpeton thalassium (strain ATCC 35110 / GB-78) protein is Triosephosphate isomerase.